The following is a 457-amino-acid chain: Protein PIN-LIKES 2 (457 aa).

The Lumenal segment spans residues 1–15 (MSGFSSGNVNSRVVD). The helical transmembrane segment at 16–36 (ILSGVVPLLKLICLTVIGLLL) threads the bilayer. The Cytoplasmic portion of the chain corresponds to 37–54 (AHPKTQLVPRATFRLLSK). Residues 55 to 75 (LVFALFLPCLIFTELGESITL) traverse the membrane as a helical segment. Residues 76–85 (DNIVQWWFIP) are Lumenal-facing. The helical transmembrane segment at 86–106 (VNVLLSAVVGSLIGYLVVLIC) threads the bilayer. Residues 107–116 (RPPPEFNRFT) are Cytoplasmic-facing. Residues 117-137 (IVMTAFGNTGNLLLAIVSSVC) form a helical membrane-spanning segment. Topologically, residues 138-151 (HTKTNPFGPNCNSR) are lumenal. The chain crosses the membrane as a helical span at residues 152–172 (GVSYVSFAQWVAVILVYTVVY). Residues 173-291 (HMMEPPLEYY…PVKHILQPPT (119 aa)) lie on the Cytoplasmic side of the membrane. A helical transmembrane segment spans residues 292-312 (IASLLAIIIGSVPQLKSVVFG). At 313–322 (YDAPLSFITD) the chain is on the lumenal side. Residues 323 to 343 (SLNIMGSAMVPSVMLVLGGML) form a helical membrane-spanning segment. Topologically, residues 344-356 (SEGPNESTLGLRT) are cytoplasmic. A helical membrane pass occupies residues 357-377 (TIGISVARLLVLPLVGIGIVM). Residues 378 to 393 (SADKLGLISSADPMFK) lie on the Lumenal side of the membrane. A helical transmembrane segment spans residues 394–414 (FVLLLQYSTPSAILLGAIASL). Over 415 to 424 (RGYAVREASA) the chain is Cytoplasmic. The chain crosses the membrane as a helical span at residues 425–445 (LLFWQHIFALLSLTFYIVIFF). The Lumenal segment spans residues 446–457 (KLTVETTVQGMQ).

It belongs to the auxin efflux carrier (TC 2.A.69.2) family. As to expression, expressed in seedlings, rosette and cauline leaves, flowers and siliques.

The protein localises to the endoplasmic reticulum membrane. Its function is as follows. Involved in cellular auxin homeostasis by regulating auxin metabolism. Regulates intracellular auxin accumulation at the endoplasmic reticulum and thus auxin availability for nuclear auxin signaling. This chain is Protein PIN-LIKES 2, found in Arabidopsis thaliana (Mouse-ear cress).